Consider the following 72-residue polypeptide: UPF0270 protein plu0398 (72 aa).

The protein belongs to the UPF0270 family.

The protein is UPF0270 protein plu0398 of Photorhabdus laumondii subsp. laumondii (strain DSM 15139 / CIP 105565 / TT01) (Photorhabdus luminescens subsp. laumondii).